We begin with the raw amino-acid sequence, 317 residues long: N-acetyl-gamma-glutamyl-phosphate reductase (317 aa).

Residue C136 is part of the active site.

This sequence belongs to the NAGSA dehydrogenase family. Type 1 subfamily.

Its subcellular location is the cytoplasm. The enzyme catalyses N-acetyl-L-glutamate 5-semialdehyde + phosphate + NADP(+) = N-acetyl-L-glutamyl 5-phosphate + NADPH + H(+). Its pathway is amino-acid biosynthesis; L-arginine biosynthesis; N(2)-acetyl-L-ornithine from L-glutamate: step 3/4. Catalyzes the NADPH-dependent reduction of N-acetyl-5-glutamyl phosphate to yield N-acetyl-L-glutamate 5-semialdehyde. This chain is N-acetyl-gamma-glutamyl-phosphate reductase, found in Stenotrophomonas maltophilia (strain R551-3).